We begin with the raw amino-acid sequence, 255 residues long: tRNA (guanine-N(7)-)-methyltransferase (255 aa).

Positions 1 to 30 (MMHDDPNEAGLPPDDAALPDEAADGADEVN) are disordered. The span at 17–27 (ALPDEAADGAD) shows a compositional bias: acidic residues. E86, E111, D138, and D161 together coordinate S-adenosyl-L-methionine. Residue D161 is part of the active site. Substrate-binding positions include K165, D197, and 232–235 (TKFE).

This sequence belongs to the class I-like SAM-binding methyltransferase superfamily. TrmB family.

The enzyme catalyses guanosine(46) in tRNA + S-adenosyl-L-methionine = N(7)-methylguanosine(46) in tRNA + S-adenosyl-L-homocysteine. It functions in the pathway tRNA modification; N(7)-methylguanine-tRNA biosynthesis. In terms of biological role, catalyzes the formation of N(7)-methylguanine at position 46 (m7G46) in tRNA. This chain is tRNA (guanine-N(7)-)-methyltransferase, found in Burkholderia vietnamiensis (strain G4 / LMG 22486) (Burkholderia cepacia (strain R1808)).